The following is a 480-amino-acid chain: Major capsid protein (480 aa).

The protein resides in the virion. In terms of biological role, major protein of the capsid. The protein is Major capsid protein (MCP-1) of Trichoplusia ni ascovirus 2c (TnAV-2c).